The following is a 358-amino-acid chain: ATP synthase gamma chain, chloroplastic (358 aa).

A chloroplast-targeting transit peptide spans 1–35; sequence MAAMLASKQGAFMGRSSFAPAPKGVASRGSLQVVA. Cys-123 is an active-site residue. An intrachain disulfide couples Cys-233 to Cys-239.

The protein belongs to the ATPase gamma chain family. As to quaternary structure, F-type ATPases have 2 components, F(1) - the catalytic core - and F(0) - the membrane proton channel. F(1) has five subunits: alpha(3), beta(3), gamma(1), delta(1), epsilon(1). F(0) has four main subunits: a(1), b(1), b'(1) and c(10-14). The alpha and beta chains form an alternating ring which encloses part of the gamma chain. F(1) is attached to F(0) by a central stalk formed by the gamma and epsilon chains, while a peripheral stalk is formed by the delta, b and b' chains.

The protein resides in the plastid. The protein localises to the chloroplast thylakoid membrane. In terms of biological role, f(1)F(0) ATP synthase produces ATP from ADP in the presence of a proton or sodium gradient. F-type ATPases consist of two structural domains, F(1) containing the extramembraneous catalytic core and F(0) containing the membrane proton channel, linked together by a central stalk and a peripheral stalk. During catalysis, ATP synthesis in the catalytic domain of F(1) is coupled via a rotary mechanism of the central stalk subunits to proton translocation. Produces ATP from ADP in the presence of a proton gradient across the membrane. The gamma chain is believed to be important in regulating ATPase activity and the flow of protons through the CF(0) complex. The protein is ATP synthase gamma chain, chloroplastic of Chlamydomonas reinhardtii (Chlamydomonas smithii).